We begin with the raw amino-acid sequence, 254 residues long: 5-oxoprolinase subunit A (254 aa).

Belongs to the LamB/PxpA family. As to quaternary structure, forms a complex composed of PxpA, PxpB and PxpC.

It carries out the reaction 5-oxo-L-proline + ATP + 2 H2O = L-glutamate + ADP + phosphate + H(+). Functionally, catalyzes the cleavage of 5-oxoproline to form L-glutamate coupled to the hydrolysis of ATP to ADP and inorganic phosphate. The chain is 5-oxoprolinase subunit A from Gluconobacter oxydans (strain 621H) (Gluconobacter suboxydans).